Here is a 564-residue protein sequence, read N- to C-terminus: ATP-dependent RNA helicase ROK1 (564 aa).

Disordered stretches follow at residues 1–45 and 62–87; these read MDIF…ESQI and EDDR…DGLI. Basic and acidic residues-rich tracts occupy residues 13–23, 33–45, and 62–86; these read VKKESGPKAKA, DENH…ESQI, and EDDR…DDGL. A Q motif motif is present at residues 122–150; the sequence is DLISRFSFDKRLLNNLIENGFTEPTPIQC. Residues 153 to 333 enclose the Helicase ATP-binding domain; sequence IPVALNNRDV…QSIMMDPVRV (181 aa). Position 166–173 (166–173) interacts with ATP; sequence GPTGSGKT. A DEAD box motif is present at residues 280 to 283; the sequence is DEAD. A Helicase C-terminal domain is found at 344-506; it reads NIEQKLIFCG…EVSEWMDKMA (163 aa). Residues 512-564 are disordered; it reads EKESIKNGKAHKERKQITTVPKMDKAKRRRQQEMIAASKRRKNEELSKKHFSK. Basic and acidic residues predominate over residues 553–564; sequence KNEELSKKHFSK.

Belongs to the DEAD box helicase family. DDX52/ROK1 subfamily. As to quaternary structure, interacts with the U3 snoRNA and is associated with the 90S and 40S pre-ribosomes. This association requires the presence of RRP5. Also interacts with OSH3.

It is found in the nucleus. The protein resides in the nucleolus. The enzyme catalyses ATP + H2O = ADP + phosphate + H(+). In terms of biological role, ATP-dependent RNA helicase involved in 40S ribosomal subunit biogenesis. Required for the processing and cleavage of 35S pre-rRNA at sites A0, A1, and A2, leading to mature 18S rRNA. May also have a gene-specific regulatory function since it affects nuclear fusion by regulating KAR4 expression and contributes with KEM1 to ISP-1 sensitivity. This chain is ATP-dependent RNA helicase ROK1 (ROK1), found in Saccharomyces cerevisiae (strain ATCC 204508 / S288c) (Baker's yeast).